We begin with the raw amino-acid sequence, 1266 residues long: Intermembrane phospholipid transporter YhdP (1266 aa).

At 1–5 (MRRLP) the chain is on the cytoplasmic side. Residues 6 to 26 (GILLLTGAALVVIAALLVSGL) traverse the membrane as a helical segment. The Periplasmic segment spans residues 27–1266 (RIALPHLDAW…LRQPRKEKAQ (1240 aa)). A P-helix region spans residues 94 to 103 (VWQSLLHMRW). Positions 1121 to 1144 (HAGQLLRLLSVDALMRKLRFDFRD) are C-helix_2. Residues 1203-1237 (ISATVGVAAAFAVNPIVGAAVFAASKVLGPLWSKV) form a C-helix_1 region.

Its subcellular location is the cell inner membrane. Involved in outer membrane lipid homeostasis. Likely transports phospholipids between the inner membrane and the outer membrane. It would provide a bridge-like structure that protects phospholipids as they travel across the periplasm. The phosphate-containing molecules are captured along the length of a hydrophobic groove that is continuous along all but the extreme N-terminus of the protein. It also appears to control, directly or indirectly, levels of cyclic enterobacterial common antigen (cyclic ECA), a soluble cyclic ECA molecule present in the periplasm. Its function is as follows. TamB, YdbH and YhdP are redundant, but not equivalent, in performing an essential function for growth and maintaining lipid homeostasis in the outer membrane. The transport functions of TamB and YhdP could be differentiated according to the fatty acid saturation state of the phospholipids, with TamB transporting more unsaturated phospholipids and YhdP more saturated phospholipids. Any of these three proteins is sufficient for growth. The chain is Intermembrane phospholipid transporter YhdP (yhdP) from Escherichia coli (strain K12).